We begin with the raw amino-acid sequence, 267 residues long: Undecaprenyl-diphosphatase (267 aa).

8 helical membrane-spanning segments follow: residues 1–21 (MSYFEAFVLALIQGLTEFLPI), 39–59 (QGLAFDVAVHVGTLAAVVIYF), 83–103 (AKLAWMIVIATIPACIFGLVM), 111–131 (LRSAYVIATTTIIFGLLLWWV), 144–164 (AGWKKALFIGIAQALAMIPGT), 189–209 (FLMSIPIITLAGSYLGLKLVT), 218–238 (FLLTGIVTSFISAYLCIHLFL), and 246–266 (MTPFVIYRLILGVGLFAYLLM).

Belongs to the UppP family.

Its subcellular location is the cell inner membrane. The catalysed reaction is di-trans,octa-cis-undecaprenyl diphosphate + H2O = di-trans,octa-cis-undecaprenyl phosphate + phosphate + H(+). In terms of biological role, catalyzes the dephosphorylation of undecaprenyl diphosphate (UPP). Confers resistance to bacitracin. The polypeptide is Undecaprenyl-diphosphatase (Vibrio vulnificus (strain CMCP6)).